The chain runs to 562 residues: Wee1-like protein kinase 2 (562 aa).

2 disordered regions span residues 1–86 (MRTA…DKGV) and 161–181 (YRQA…DDCS). A compositionally biased stretch (polar residues) spans 35–48 (HSNQRGSPVNSWRA). The Protein kinase domain occupies 217 to 491 (FLEIEKIGAG…AKNSLLRRCV (275 aa)). ATP is bound by residues 223–231 (IGAGEFGSV) and lysine 246. Aspartate 344 functions as the Proton acceptor in the catalytic mechanism. Mg(2+) is bound by residues asparagine 349 and aspartate 381. A coiled-coil region spans residues 494–520 (AAQLQKQLNVEKFKTAMLERELKAAKL).

The protein belongs to the protein kinase superfamily. Ser/Thr protein kinase family. WEE1 subfamily.

The protein resides in the nucleus. It catalyses the reaction L-tyrosyl-[protein] + ATP = O-phospho-L-tyrosyl-[protein] + ADP + H(+). Oocyte-specific protein tyrosine kinase that phosphorylates and inhibits cdk1 and acts as a regulator of meiosis. Required to maintain meiotic arrest in oocytes by phosphorylating cdk1 at 'Tyr-15', leading to inhibit cdk1 activity and prevent meiotic reentry. This Xenopus tropicalis (Western clawed frog) protein is Wee1-like protein kinase 2 (wee2).